The following is a 138-amino-acid chain: RutC family protein UK114 (138 aa).

It belongs to the RutC family.

In terms of biological role, molecular chaperone. Seems to fulfill an ATP-independent, HSP70-like function in protein folding. May protect essential factors of cell proliferation during heat shock. No role in calpain activation. This is RutC family protein UK114 from Drosophila melanogaster (Fruit fly).